The primary structure comprises 841 residues: Protein translocase subunit SecA (841 aa).

ATP contacts are provided by residues Q86, 104–108 (GEGKT), and D493. The tract at residues 788-822 (EEVAEGKAVRPSANGQEDKKAKRKPVRKAENIGRN) is disordered. Zn(2+) contacts are provided by C825, C827, C836, and C837.

The protein belongs to the SecA family. In terms of assembly, monomer and homodimer. Part of the essential Sec protein translocation apparatus which comprises SecA, SecYEG and auxiliary proteins SecDF. Other proteins may also be involved. The cofactor is Zn(2+).

The protein resides in the cell membrane. It localises to the cytoplasm. It catalyses the reaction ATP + H2O + cellular proteinSide 1 = ADP + phosphate + cellular proteinSide 2.. Its function is as follows. Part of the Sec protein translocase complex. Interacts with the SecYEG preprotein conducting channel. Has a central role in coupling the hydrolysis of ATP to the transfer of proteins into and across the cell membrane, serving as an ATP-driven molecular motor driving the stepwise translocation of polypeptide chains across the membrane. This Shouchella clausii (strain KSM-K16) (Alkalihalobacillus clausii) protein is Protein translocase subunit SecA.